A 194-amino-acid polypeptide reads, in one-letter code: Bis(5'-nucleosyl)-tetraphosphatase, symmetrical (194 aa).

The HD domain maps to 18 to 132 (RYNHSLRVAE…IFIADYIEPG (115 aa)). His-21 serves as a coordination point for ADP. Fe cation is bound by residues His-21, His-50, and Asp-51. ADP-binding positions include 51 to 54 (DFCK), His-83, 109 to 110 (HT), Asp-127, Arg-133, and 172 to 177 (TVYNKT). Asp-127 contributes to the Fe cation binding site.

Belongs to the Ap4A hydrolase YqeK family. As to quaternary structure, homodimer.

It catalyses the reaction P(1),P(4)-bis(5'-adenosyl) tetraphosphate + H2O = 2 ADP + 2 H(+). Its activity is regulated as follows. Inhibited by EDTA. Functionally, hydrolyzes diadenosine 5',5'''-P1,P4-tetraphosphate (Ap4A) to yield ADP. Can also hydrolyze Ap3A, Ap5A, Ap4G, Ap4U and Gp4G, always releasing ADP or GDP as one of the products, but it exhibits a marked preference for Ap4A, which is mainly exerted at the substrate affinity level. The sequence is that of Bis(5'-nucleosyl)-tetraphosphatase, symmetrical from Staphylococcus aureus (strain NCTC 8325 / PS 47).